Reading from the N-terminus, the 408-residue chain is BRCA1-A complex subunit Abraxas 1 (408 aa).

Residues T7–L155 enclose the MPN domain. Residues A210 to A273 are a coiled coil. Residues L360–S372 show a composition bias toward polar residues. The tract at residues L360–F408 is disordered. S405 is modified (phosphoserine). The pSXXF motif signature appears at S405–F408.

Belongs to the FAM175 family. Abraxas subfamily. Component of the BRCA1-A complex. Component of the BRISC complex. Interacts directly (when phosphorylated at Ser-405) with brca1. Homodimer. The phosphorylated homodimer can interact directly with two brca1 chains, giving rise to a heterotetramer. In terms of processing, phosphorylation of Ser-405 of the pSXXF motif by ATM or ATR constitutes a specific recognition motif for the BRCT domain of BRCA1.

It localises to the nucleus. Involved in DNA damage response and double-strand break (DSB) repair. Component of the BRCA1-A complex, acting as a central scaffold protein that assembles the various components of the complex and mediates the recruitment of brca1. The BRCA1-A complex specifically recognizes 'Lys-63'-linked ubiquitinated histones H2A and H2AX at DNA lesion sites, leading to target the brca1-bard1 heterodimer to sites of DNA damage at DSBs. This complex also possesses deubiquitinase activity that specifically removes 'Lys-63'-linked ubiquitin on histones H2A and H2AX. This Xenopus tropicalis (Western clawed frog) protein is BRCA1-A complex subunit Abraxas 1.